Here is a 337-residue protein sequence, read N- to C-terminus: MSGSPVKRQRMENALDQLKQFTTVVADTGDFHAIDEYKPQDATTNPSLILAAAQMPTYQELVEEAIAYGRKLGGSQEEQITNAIDKLFVLFGAEILKKIPGRVSTEVDARLSFDKDAMVARARRLIELYKEAGISKERILIKLSSTWEGIQAGKELEEHHGIRCNMTLLFSFAQAVACAEAGVTLISPFVGRILDWHVANTDKKSYETQEDPGVKSVTKIYNYYKKFGYKTIVMGASFRNTGEIKALAGCDFLTISPQLLGELLKDHSKLTPVLSAKAAQASDLEKIQLDEKAFRWLHNEDRMAVEKLSDGIRRFAADAVKLERMLRERMFSAENGK.

Lys115 is modified (N6-acetyllysine). Residue Lys142 is the Schiff-base intermediate with substrate of the active site. An N6-acetyllysine modification is found at Lys219. Phosphoserine occurs at positions 237 and 256. Residues Lys269, Lys286, and Lys321 each carry the N6-acetyllysine modification.

The protein belongs to the transaldolase family. Type 1 subfamily. In terms of assembly, homodimer.

Its subcellular location is the cytoplasm. The catalysed reaction is D-sedoheptulose 7-phosphate + D-glyceraldehyde 3-phosphate = D-erythrose 4-phosphate + beta-D-fructose 6-phosphate. It functions in the pathway carbohydrate degradation; pentose phosphate pathway; D-glyceraldehyde 3-phosphate and beta-D-fructose 6-phosphate from D-ribose 5-phosphate and D-xylulose 5-phosphate (non-oxidative stage): step 2/3. Transaldolase is important for the balance of metabolites in the pentose-phosphate pathway. This Bos taurus (Bovine) protein is Transaldolase (TALDO1).